The sequence spans 155 residues: Transmembrane protein C1orf162 (155 aa).

The segment at 1–28 (MGGNGSTCKPDTERQGTLSTAAPTTSPA) is disordered. Positions 19 to 28 (STAAPTTSPA) are enriched in low complexity. A helical transmembrane segment spans residues 41–61 (ILAFCAGVLLTLLLIAFIFLI). Residues 92 to 114 (ADHSKPQAPDPHSDPPAKLSSIP) are disordered. Ser-140 bears the Phosphoserine mark.

Its subcellular location is the membrane. The polypeptide is Transmembrane protein C1orf162 (C1orf162) (Homo sapiens (Human)).